Consider the following 57-residue polypeptide: Large ribosomal subunit protein bL32c (57 aa).

In terms of assembly, component of the chloroplast large ribosomal subunit (LSU). Mature 70S chloroplast ribosomes of higher plants consist of a small (30S) and a large (50S) subunit. The 30S small subunit contains 1 molecule of ribosomal RNA (16S rRNA) and 24 different proteins. The 50S large subunit contains 3 rRNA molecules (23S, 5S and 4.5S rRNA) and 33 different proteins.

Its subcellular location is the plastid. The protein localises to the chloroplast. Functionally, component of the chloroplast ribosome (chloro-ribosome), a dedicated translation machinery responsible for the synthesis of chloroplast genome-encoded proteins, including proteins of the transcription and translation machinery and components of the photosynthetic apparatus. This chain is Large ribosomal subunit protein bL32c (rpl32), found in Spinacia oleracea (Spinach).